A 248-amino-acid chain; its full sequence is Ubiquinone biosynthesis O-methyltransferase (248 aa).

S-adenosyl-L-methionine contacts are provided by arginine 40, glycine 71, aspartate 92, and methionine 135.

It belongs to the methyltransferase superfamily. UbiG/COQ3 family.

It catalyses the reaction a 3-demethylubiquinol + S-adenosyl-L-methionine = a ubiquinol + S-adenosyl-L-homocysteine + H(+). The enzyme catalyses a 3-(all-trans-polyprenyl)benzene-1,2-diol + S-adenosyl-L-methionine = a 2-methoxy-6-(all-trans-polyprenyl)phenol + S-adenosyl-L-homocysteine + H(+). It participates in cofactor biosynthesis; ubiquinone biosynthesis. Functionally, O-methyltransferase that catalyzes the 2 O-methylation steps in the ubiquinone biosynthetic pathway. The polypeptide is Ubiquinone biosynthesis O-methyltransferase (Ruegeria pomeroyi (strain ATCC 700808 / DSM 15171 / DSS-3) (Silicibacter pomeroyi)).